We begin with the raw amino-acid sequence, 236 residues long: Sugar fermentation stimulation protein homolog (236 aa).

It belongs to the SfsA family.

In Desulfotalea psychrophila (strain LSv54 / DSM 12343), this protein is Sugar fermentation stimulation protein homolog.